The primary structure comprises 175 residues: Ribosome maturation factor RimM (175 aa).

The region spanning 96-175 (EGDYYWHDLI…TITVDWDAGF (80 aa)) is the PRC barrel domain.

It belongs to the RimM family. As to quaternary structure, binds ribosomal protein uS19.

It is found in the cytoplasm. Its function is as follows. An accessory protein needed during the final step in the assembly of 30S ribosomal subunit, possibly for assembly of the head region. Essential for efficient processing of 16S rRNA. May be needed both before and after RbfA during the maturation of 16S rRNA. It has affinity for free ribosomal 30S subunits but not for 70S ribosomes. This Actinobacillus pleuropneumoniae serotype 5b (strain L20) protein is Ribosome maturation factor RimM.